Consider the following 682-residue polypeptide: Potassium-transporting ATPase ATP-binding subunit (682 aa).

Helical transmembrane passes span Pro34–Ala54, Ala62–Ala82, Ile219–Leu239, and Val254–Ile274. Residue Asp307 is the 4-aspartylphosphate intermediate of the active site. ATP contacts are provided by residues Asp344, Glu348, Phe377–Ser384, and Lys395. Mg(2+) is bound by residues Asp518 and Asp522. The next 3 helical transmembrane spans lie at Phe588 to Met608, Ala616 to Leu636, and Ile656 to Leu676.

This sequence belongs to the cation transport ATPase (P-type) (TC 3.A.3) family. Type IA subfamily. As to quaternary structure, the system is composed of three essential subunits: KdpA, KdpB and KdpC.

The protein localises to the cell inner membrane. It carries out the reaction K(+)(out) + ATP + H2O = K(+)(in) + ADP + phosphate + H(+). Part of the high-affinity ATP-driven potassium transport (or Kdp) system, which catalyzes the hydrolysis of ATP coupled with the electrogenic transport of potassium into the cytoplasm. This subunit is responsible for energy coupling to the transport system and for the release of the potassium ions to the cytoplasm. This Escherichia coli O9:H4 (strain HS) protein is Potassium-transporting ATPase ATP-binding subunit.